Here is a 241-residue protein sequence, read N- to C-terminus: Uridylate kinase (241 aa).

14–17 (KLSG) lines the ATP pocket. The tract at residues 22–27 (GNQGFG) is involved in allosteric activation by GTP. Gly-56 is a UMP binding site. ATP-binding residues include Gly-57 and Arg-61. UMP is bound by residues Asp-76 and 137–144 (TGNPYFTT). ATP contacts are provided by Thr-164, Tyr-170, and Asp-173.

This sequence belongs to the UMP kinase family. Homohexamer.

It is found in the cytoplasm. The enzyme catalyses UMP + ATP = UDP + ADP. Its pathway is pyrimidine metabolism; CTP biosynthesis via de novo pathway; UDP from UMP (UMPK route): step 1/1. Its activity is regulated as follows. Allosterically activated by GTP. Inhibited by UTP. Catalyzes the reversible phosphorylation of UMP to UDP. This is Uridylate kinase from Syntrophotalea carbinolica (strain DSM 2380 / NBRC 103641 / GraBd1) (Pelobacter carbinolicus).